A 297-amino-acid chain; its full sequence is Probable endonuclease 4 (297 aa).

Residues H69, H110, E145, D179, H182, H214, D227, H229, and E259 each contribute to the Zn(2+) site.

Belongs to the AP endonuclease 2 family. Zn(2+) serves as cofactor.

The enzyme catalyses Endonucleolytic cleavage to 5'-phosphooligonucleotide end-products.. Endonuclease IV plays a role in DNA repair. It cleaves phosphodiester bonds at apurinic or apyrimidinic (AP) sites, generating a 3'-hydroxyl group and a 5'-terminal sugar phosphate. The sequence is that of Probable endonuclease 4 from Bacillus licheniformis (strain ATCC 14580 / DSM 13 / JCM 2505 / CCUG 7422 / NBRC 12200 / NCIMB 9375 / NCTC 10341 / NRRL NRS-1264 / Gibson 46).